A 1360-amino-acid polypeptide reads, in one-letter code: Ubiquitin carboxyl-terminal hydrolase 19 (1360 aa).

Residues 1–46 (MSAGASATGPRRGPPGLEEATSKKKQKDRANLESKDGDARRVSLPR) are disordered. Residues 1–1333 (MSAGASATGP…TTPDEGCLRY (1333 aa)) are Cytoplasmic-facing. Positions 28–46 (DRANLESKDGDARRVSLPR) are enriched in basic and acidic residues. One can recognise a CS 1 domain in the interval 51–140 (KDELLLDWRQ…VPLLTWPSLL (90 aa)). The tract at residues 163-239 (PIALEPGSEP…APSFLSDSAT (77 aa)) is disordered. The segment covering 170 to 181 (SEPRRAKQEARN) has biased composition (basic and acidic residues). Positions 189–199 (GEVGSGAGPGT) are enriched in gly residues. The residue at position 220 (S220) is a Phosphoserine. In terms of domain architecture, CS 2 spans 322–424 (LAFVKNDSYE…RQSQRWGGLE (103 aa)). Residues 432–482 (VGGAKVAVPTGPTPLDSTPPGGGPHPLTGQEEARAVEKEKPKARSEDSGLD) form a disordered region. The segment covering 462 to 478 (EEARAVEKEKPKARSED) has biased composition (basic and acidic residues). The 718-residue stretch at 539–1256 (TGLVNLGNTC…YAYVLFYRRR (718 aa)) folds into the USP domain. The active-site Nucleophile is the C548. Positions 833, 836, 850, 853, 859, 863, 871, and 875 each coordinate Zn(2+). The MYND-type zinc-finger motif lies at 833-875 (CAACQRKQQSEEEKLKRCTRCYRVGYCNQFCQKTHWPDHKGLC). The tract at residues 965-988 (DTGAHRVWPPADRGPVPSTSGLSS) is disordered. H1207 functions as the Proton acceptor in the catalytic mechanism. A compositionally biased stretch (basic and acidic residues) spans 1259-1274 (PVERPPRASHSEHHPD). The disordered stretch occupies residues 1259-1281 (PVERPPRASHSEHHPDLGPAAEA). Residues 1334–1354 (FVLGTVAALVALVLNVFYPLV) form a helical membrane-spanning segment. Residues 1355-1360 (SQSRWR) are Lumenal-facing.

Interacts with RNF123. Interacts with BIRC2/c-IAP1, BIRC3/c-IAP2 and XIAP/BIRC4. Interacts with HIF1A (via N-terminus).

The protein resides in the endoplasmic reticulum membrane. The enzyme catalyses Thiol-dependent hydrolysis of ester, thioester, amide, peptide and isopeptide bonds formed by the C-terminal Gly of ubiquitin (a 76-residue protein attached to proteins as an intracellular targeting signal).. Functionally, deubiquitinating enzyme that regulates the degradation of various proteins by removing ubiquitin moieties, thereby preventing their proteasomal degradation. Stabilizes RNF123, which promotes CDKN1B degradation and contributes to cell proliferation. Decreases the levels of ubiquitinated proteins during skeletal muscle formation and acts to repress myogenesis. Modulates transcription of major myofibrillar proteins. Also involved in turnover of endoplasmic-reticulum-associated degradation (ERAD) substrates. Mechanistically, deubiquitinates and thereby stabilizes several E3 ligases involved in the ERAD pathway including SYVN1 or MARCHF6. Regulates the stability of other E3 ligases including BIRC2/c-IAP1 and BIRC3/c-IAP2 by preventing their ubiquitination. Required for cells to mount an appropriate response to hypoxia by rescuing HIF1A from degradation in a non-catalytic manner and by mediating the deubiquitination of FUNDC1. Attenuates mitochondrial damage and ferroptosis by targeting and stabilizing NADPH oxidase 4/NOX4. Negatively regulates TNF-alpha- and IL-1beta-triggered NF-kappa-B activation by hydrolyzing 'Lys-27'- and 'Lys-63'-linked polyubiquitin chains from MAP3K7. Modulates also the protein level and aggregation of polyQ-expanded huntingtin/HTT through HSP90AA1. The sequence is that of Ubiquitin carboxyl-terminal hydrolase 19 (Usp19) from Mus musculus (Mouse).